The chain runs to 459 residues: Friend virus susceptibility protein 1 (459 aa).

Positions 192–269 (EAELPTVLAS…LNSLAHSNRQ (78 aa)) are disordered. Positions 213-223 (SKERTQQDKAD) are enriched in basic and acidic residues. Positions 226–238 (QIQSSTSLVTSEP) are enriched in polar residues.

In terms of biological role, retroviral restriction factor that prevents infection by gammaretroviruses. Acts by interacting with the capsid protein ca after entry of the virus into the cell. This interaction presumably disrupt the capsid thereby inactivating the viral genome, making it unable to enter host nucleus and integrate into host genome. This chain is Friend virus susceptibility protein 1 (Fv1), found in Mus musculus (Mouse).